Here is a 62-residue protein sequence, read N- to C-terminus: Snaclec aspercetin subunit alpha (62 aa).

Cysteine 2 and cysteine 13 are oxidised to a cystine. The region spanning 9 to 62 (YEGHCYRFFHPPKDWADAERFCTEQAKGGALVSIQRFGEEDFVSNLITKNLQRG) is the C-type lectin domain.

This sequence belongs to the snaclec family. In terms of assembly, heterodimer; disulfide-linked. In terms of tissue distribution, expressed by the venom gland.

It is found in the secreted. Its function is as follows. Snaclec that binds to von Willebrand factor (VWF) and induces its interaction with GPIbalpha (GP1BA) (via the vWF A1 domain), resulting in platelet aggregation. Intravenous injection in mice induces a dose-dependent drop in platelet count (thrombocytopenia). Pretreatment by intravenous injection by this protein in mice potentiates the hemorrhagic lesion in the skin provoked by the metalloproteinase BaP1 intradermally injected. This result is not observed when both BaP1 and this protein are injected simultaneously. This chain is Snaclec aspercetin subunit alpha, found in Bothrops asper (Terciopelo).